The sequence spans 393 residues: SH3 domain-binding protein 5-like (393 aa).

The disordered stretch occupies residues 1-58; it reads MAELRQVPGGRETPQGELRPEVVEDEVPRSPVAEEPGGGGSSSSEAKLSPREEEELDP. Thr-13 bears the Phosphothreonine mark. Positions 18 to 28 are enriched in basic and acidic residues; the sequence is LRPEVVEDEVP. Phosphoserine is present on residues Ser-30 and Ser-49. Coiled coils occupy residues 59-140 and 169-272; these read RIQE…YERA and WQEM…EQIH. The tract at residues 273 to 332 is disordered; sequence ARRRGGLPPHPLGPRRSSPVGAEAGPEDMEDGDSGIEGAEGAGLEEGSSLGPGPAPDTDT. A compositionally biased stretch (acidic residues) spans 297-306; it reads GPEDMEDGDS. The segment covering 317 to 332 has biased composition (low complexity); that stretch reads EEGSSLGPGPAPDTDT. A phosphoserine mark is found at Ser-343, Ser-350, Ser-358, Ser-362, and Ser-378. The tract at residues 362-393 is disordered; the sequence is SLDGQELGTRSGGRRGSDGGARGGRHQRSVSL. Over residues 384 to 393 the composition is skewed to basic residues; the sequence is GGRHQRSVSL.

This sequence belongs to the SH3BP5 family.

Functionally, functions as a guanine nucleotide exchange factor (GEF) for RAB11A. The sequence is that of SH3 domain-binding protein 5-like (SH3BP5L) from Homo sapiens (Human).